The primary structure comprises 376 residues: Succinyl-diaminopimelate desuccinylase (376 aa).

A Zn(2+)-binding site is contributed by H67. Residue D69 is part of the active site. Residue D100 coordinates Zn(2+). The active-site Proton acceptor is the E134. Zn(2+)-binding residues include E135, E163, and H349.

The protein belongs to the peptidase M20A family. DapE subfamily. Homodimer. It depends on Zn(2+) as a cofactor. Co(2+) serves as cofactor.

It catalyses the reaction N-succinyl-(2S,6S)-2,6-diaminopimelate + H2O = (2S,6S)-2,6-diaminopimelate + succinate. Its pathway is amino-acid biosynthesis; L-lysine biosynthesis via DAP pathway; LL-2,6-diaminopimelate from (S)-tetrahydrodipicolinate (succinylase route): step 3/3. Catalyzes the hydrolysis of N-succinyl-L,L-diaminopimelic acid (SDAP), forming succinate and LL-2,6-diaminopimelate (DAP), an intermediate involved in the bacterial biosynthesis of lysine and meso-diaminopimelic acid, an essential component of bacterial cell walls. In Idiomarina loihiensis (strain ATCC BAA-735 / DSM 15497 / L2-TR), this protein is Succinyl-diaminopimelate desuccinylase.